The sequence spans 424 residues: Tubby protein homolog 1 (424 aa).

The tract at residues 19–47 (MLEDKQKQKRHQSAGSVRTTTTTSSMSMN) is disordered. Residues 37 to 47 (TTTTTSSMSMN) show a composition bias toward low complexity.

It belongs to the TUB family. In terms of assembly, interacts with rgb-3.

The protein resides in the cytoplasm. It is found in the cell projection. It localises to the axon. Its subcellular location is the dendrite. The protein localises to the cilium. Its function is as follows. Has a role in fat regulation independent of daf-16. Implicated in ciliar sensory function which is required for normal sensory behavior such as chemotaxis. Functions in life span control via the insulin/IGF-1 pathway. Thought to be involved in neuronal trafficking. This is Tubby protein homolog 1 from Caenorhabditis briggsae.